Reading from the N-terminus, the 247-residue chain is 5-oxoprolinase subunit A (247 aa).

This sequence belongs to the LamB/PxpA family. As to quaternary structure, forms a complex composed of PxpA, PxpB and PxpC.

It catalyses the reaction 5-oxo-L-proline + ATP + 2 H2O = L-glutamate + ADP + phosphate + H(+). Its function is as follows. Catalyzes the cleavage of 5-oxoproline to form L-glutamate coupled to the hydrolysis of ATP to ADP and inorganic phosphate. This Vibrio vulnificus (strain YJ016) protein is 5-oxoprolinase subunit A.